The chain runs to 170 residues: tRNA-splicing endonuclease (170 aa).

Active-site residues include Tyr106, His116, and Lys147.

Belongs to the tRNA-intron endonuclease family. Archaeal short subfamily. In terms of assembly, homotetramer; although the tetramer contains four active sites, only two participate in the cleavage. Therefore, it should be considered as a dimer of dimers.

It catalyses the reaction pretRNA = a 3'-half-tRNA molecule with a 5'-OH end + a 5'-half-tRNA molecule with a 2',3'-cyclic phosphate end + an intron with a 2',3'-cyclic phosphate and a 5'-hydroxyl terminus.. Functionally, endonuclease that removes tRNA introns. Cleaves pre-tRNA at the 5'- and 3'-splice sites to release the intron. The products are an intron and two tRNA half-molecules bearing 2',3' cyclic phosphate and 5'-OH termini. Recognizes a pseudosymmetric substrate in which 2 bulged loops of 3 bases are separated by a stem of 4 bp. The sequence is that of tRNA-splicing endonuclease from Methanothermobacter thermautotrophicus (strain ATCC 29096 / DSM 1053 / JCM 10044 / NBRC 100330 / Delta H) (Methanobacterium thermoautotrophicum).